The chain runs to 44 residues: Defensin-like protein 1 (44 aa).

Glutamine 1 is modified (pyrrolidone carboxylic acid). A disulfide bridge links cysteine 15 with cysteine 36.

This sequence belongs to the DEFL family. As to quaternary structure, forms oligomers in its native state.

The protein resides in the secreted. Its function is as follows. Possesses antifungal activity sensitive to inorganic cations. This is Defensin-like protein 1 (AFP1) from Brassica napus (Rape).